Consider the following 196-residue polypeptide: Endoribonuclease YbeY (196 aa).

The Zn(2+) site is built by histidine 120, histidine 124, and histidine 130.

Belongs to the endoribonuclease YbeY family. Zn(2+) is required as a cofactor.

It is found in the cytoplasm. In terms of biological role, single strand-specific metallo-endoribonuclease involved in late-stage 70S ribosome quality control and in maturation of the 3' terminus of the 16S rRNA. The polypeptide is Endoribonuclease YbeY (Corynebacterium diphtheriae (strain ATCC 700971 / NCTC 13129 / Biotype gravis)).